The following is a 1328-amino-acid chain: MKKIIKIRRFKFPFTKEKTINFASVRNKISYPDFLDIQIKSFTNFFCINYTYKNISNKGFYKVFIEYFPISDSKNKFIIDFISYKIYDPLYSIEECIKRGLTYNVYIRARFKIYRTRKRKITIENKRTKYFETIYQDVYFGTCPYMTPSGSFIFNGSERVIVSQLHRSPGVFFGQYDIPNLPKISYARIIPLKGSWIELSTDINNVMYIYLDIKKRLPITTLLRALGYTRDIDILNIFNLAEEVNINKVNYKKFLGRTLAARIFKTSYQKFEENDILLERNIKLKKYHIDIILYYKIKVISLYKKNEKNEKNLYYSIIHNTLKKDPTNSQKEANIYIYKELKDSFPKNDKKAKLFINKFFFDETHLGEVGRYKLNKTLKLDFPLKDQILNIEDIISIIENLIALCNNKKEVDDIDNLANRRVKTVGEQLYTQYTIGIARVSRIIKERINVKDNETLTPLELINSKTLTSVINSFFGTDELSQFMDQTNPLAEMTHKRRISSLGPGGLSRERAGFEIRDVNYSHYGRLCPIETPEGPNIGLISSLCVFAKINSMGFIETPYFKVKKGKVVINEAPIYISSDQEYGKLITQANAILNYKTGVLKNNIIVRVNADFPMVNYKKINYIDVSTNQIASISASLIPFLEHDDANRALMGSNMMRQSVPLLNPKAPIVGTGLEKHLAQYVNALIYAEGDGIVESVDANNIKVKYFNSEKEKLLSFEKRIKTYKLIKFRKTNQNTCLNIRPIVKKGMYVTKGQVLCEGFATQNGKLALGRNIKVAFMPFKGYNFEDAIVISEKVVREDWFTSIHIDEYSLEVRDTKLGMEEFTFDIPNFNEENKKKLDKYGIIKIGSEVKPGDVLIGRITPKKEGYPSSEENFLKAIFGKKVGTIKNTSLKADSSLFGVVIDTKIYSKFSSKEDEQKQFQIKKLNNKFMKNLKLLRKLLINKLILVLEGSVSEGILNSSYKEIIPKGKILNKLNLKKLLKNQEIIYQNWVNNKYKNNLVFKIIKFYYLKINELKIKLKRKKNRLLIGDEITSGIIKIAKVLIAKKRKLKVGDKMSGRHGNKGIVARIVKEEDMPYLEDGTSVDLVLNPLGVPSRMNLGQIYETILGWAGEKLGINFSTPIFDGASIEEISKYTDIANLPSFGNTYLFDGETGEKFDQPVTVGVIYMLKLNHMVDDKMHARSIGPYSLITQQPLGGKSKFGGQRLGEMEVWALEAFGAANILREILTVKSDDVKGRTKTYEAIVKRETIPNPGIPESFHVLLKELKGLGLSLKLEVIKKKEKKNQKIKVRIEIKEKDIIKYKKKVKEIKLKKLKELKEQLSKSNKKK.

Belongs to the RNA polymerase beta chain family. As to quaternary structure, the RNAP catalytic core consists of 2 alpha, 1 beta, 1 beta' and 1 omega subunit. When a sigma factor is associated with the core the holoenzyme is formed, which can initiate transcription.

The catalysed reaction is RNA(n) + a ribonucleoside 5'-triphosphate = RNA(n+1) + diphosphate. Functionally, DNA-dependent RNA polymerase catalyzes the transcription of DNA into RNA using the four ribonucleoside triphosphates as substrates. In Karelsulcia muelleri (strain GWSS) (Sulcia muelleri), this protein is DNA-directed RNA polymerase subunit beta.